The sequence spans 190 residues: Histone-arginine methyltransferase METTL23 (190 aa).

The protein belongs to the methyltransferase superfamily. METTL23 family. In terms of assembly, interacts with HSPA5, HSP90B1, TUBULIN, UGGT1 and UGGT2. Interacts with TET3. Interacts with STPG4.

It localises to the nucleus. The protein resides in the cytoplasm. The enzyme catalyses L-arginyl-[protein] + 2 S-adenosyl-L-methionine = N(omega),N(omega)-dimethyl-L-arginyl-[protein] + 2 S-adenosyl-L-homocysteine + 2 H(+). Its function is as follows. Histone methyltransferase that dimethylates histone H3 at 'Arg-17', forming asymmetric dimethylarginine (H3R17me2a), leading to activate transcription via chromatin remodeling. Maternal factor involved in epigenetic chromatin reprogramming of the paternal genome in the zygote: mediates H3R17me2a, promoting histone H3.3 incorporation in the male pronucleus, leading to TET3 recruitment and subsequent DNA demethylation. This Homo sapiens (Human) protein is Histone-arginine methyltransferase METTL23.